We begin with the raw amino-acid sequence, 286 residues long: 33 kDa chaperonin (286 aa).

2 disulfide bridges follow: C236/C238 and C264/C267.

It belongs to the HSP33 family. Post-translationally, under oxidizing conditions two disulfide bonds are formed involving the reactive cysteines. Under reducing conditions zinc is bound to the reactive cysteines and the protein is inactive.

The protein resides in the cytoplasm. Redox regulated molecular chaperone. Protects both thermally unfolding and oxidatively damaged proteins from irreversible aggregation. Plays an important role in the bacterial defense system toward oxidative stress. In Carboxydothermus hydrogenoformans (strain ATCC BAA-161 / DSM 6008 / Z-2901), this protein is 33 kDa chaperonin.